A 113-amino-acid polypeptide reads, in one-letter code: Nucleoid-associated protein RHA1_ro04210 (113 aa).

Belongs to the YbaB/EbfC family. In terms of assembly, homodimer.

It is found in the cytoplasm. Its subcellular location is the nucleoid. Functionally, binds to DNA and alters its conformation. May be involved in regulation of gene expression, nucleoid organization and DNA protection. This chain is Nucleoid-associated protein RHA1_ro04210, found in Rhodococcus jostii (strain RHA1).